Here is a 267-residue protein sequence, read N- to C-terminus: Lyso-ornithine lipid O-acyltransferase (267 aa).

The helical transmembrane segment at 7 to 27 (IFLVVAAMVALSLSLIPFQYL) threads the bilayer.

The protein belongs to the 1-acyl-sn-glycerol-3-phosphate acyltransferase family. OlsA subfamily.

The protein localises to the membrane. It catalyses the reaction a lyso-ornithine lipid + a fatty acyl-[ACP] = an N(2)-[(3R)-3-(acyloxy)acyl]-L-ornithine lipid + holo-[ACP]. It participates in lipid metabolism. Its function is as follows. Catalyzes the second step in the formation of ornithine lipids, which are phosphorus-free membrane lipids. Uses acyl-acyl carrier protein (acyl-AcpP) as an acyl donor and converts lyso-ornithine lipid (LOL) into ornithine lipid (OL). This chain is Lyso-ornithine lipid O-acyltransferase, found in Brucella abortus (strain 2308).